The primary structure comprises 507 residues: Chromosomal replication initiator protein DnaA (507 aa).

Residues 1-112 form a domain I, interacts with DnaA modulators region; sequence MTDDPGSGFT…PATDEADDTT (112 aa). Positions 99 to 162 are disordered; that stretch reads RIAPPATDEA…ERPRNTDSAT (64 aa). Residues 113-127 are compositionally biased toward polar residues; the sequence is VPPSENPATTSPDTT. The segment at 113 to 166 is domain II; sequence VPPSENPATTSPDTTTDNDEIDDSAAARGDNQHSWPSYFTERPRNTDSATAGVT. The tract at residues 167 to 383 is domain III, AAA+ region; it reads SLNRRYTFDT…GALIRVTAFA (217 aa). Residues Gly211, Gly213, Lys214, and Thr215 each contribute to the ATP site. The segment at 384–507 is domain IV, binds dsDNA; sequence SLNKTPIDKA…TTRIRQRSKR (124 aa).

This sequence belongs to the DnaA family. Oligomerizes as a right-handed, spiral filament on DNA at oriC.

Its subcellular location is the cytoplasm. Its function is as follows. Plays an essential role in the initiation and regulation of chromosomal replication. ATP-DnaA binds to the origin of replication (oriC) to initiate formation of the DNA replication initiation complex once per cell cycle. Binds the DnaA box (a 9 base pair repeat at the origin) and separates the double-stranded (ds)DNA. Forms a right-handed helical filament on oriC DNA; dsDNA binds to the exterior of the filament while single-stranded (ss)DNA is stabiized in the filament's interior. The ATP-DnaA-oriC complex binds and stabilizes one strand of the AT-rich DNA unwinding element (DUE), permitting loading of DNA polymerase. After initiation quickly degrades to an ADP-DnaA complex that is not apt for DNA replication. Binds acidic phospholipids. This Mycobacterium bovis (strain ATCC BAA-935 / AF2122/97) protein is Chromosomal replication initiator protein DnaA.